The following is a 134-amino-acid chain: Small ribosomal subunit protein uS11 (134 aa).

It belongs to the universal ribosomal protein uS11 family. As to quaternary structure, part of the 30S ribosomal subunit. Interacts with proteins S7 and S18. Binds to IF-3.

Its function is as follows. Located on the platform of the 30S subunit, it bridges several disparate RNA helices of the 16S rRNA. Forms part of the Shine-Dalgarno cleft in the 70S ribosome. This Polaromonas naphthalenivorans (strain CJ2) protein is Small ribosomal subunit protein uS11.